The sequence spans 129 residues: Mini-ribonuclease 3-like protein (129 aa).

The active site involves D23.

It belongs to the MrnC RNase family.

Its function is as follows. Might be a ribonuclease involved in RNA processing. The sequence is that of Mini-ribonuclease 3-like protein (mrnCL) from Fusobacterium nucleatum subsp. nucleatum (strain ATCC 25586 / DSM 15643 / BCRC 10681 / CIP 101130 / JCM 8532 / KCTC 2640 / LMG 13131 / VPI 4355).